Here is a 591-residue protein sequence, read N- to C-terminus: Protein NRT1/ PTR FAMILY 4.3 (591 aa).

Residues 1 to 10 (MAEINKQSNK) are compositionally biased toward polar residues. A disordered region spans residues 1–38 (MAEINKQSNKWEQEEVSNENNWELAEEESVDWRGRPSN). 12 helical membrane-spanning segments follow: residues 47-67 (AALF…AVGN), 85-105 (ANIV…GGYL), 109-129 (FLGS…GFIL), 157-177 (GFKA…SGCV), 204-224 (FNAA…LLVW), 233-253 (IGFG…VSGT), 347-367 (LISL…LAQL), 395-415 (AIPY…LVPF), 429-449 (LTRI…AAML), 463-483 (ILSI…EMFT), 502-522 (FLMA…SVLV), and 551-571 (LFYW…LFWS).

This sequence belongs to the major facilitator superfamily. Proton-dependent oligopeptide transporter (POT/PTR) (TC 2.A.17) family. Expressed in flowers. Detected in roots and siliques.

Its subcellular location is the membrane. This Arabidopsis thaliana (Mouse-ear cress) protein is Protein NRT1/ PTR FAMILY 4.3 (NPF4.3).